The chain runs to 632 residues: 1-deoxy-D-xylulose-5-phosphate synthase (632 aa).

Residues histidine 87 and 128 to 130 (GHS) each bind thiamine diphosphate. Aspartate 159 is a Mg(2+) binding site. Thiamine diphosphate contacts are provided by residues 160–161 (GA), asparagine 188, phenylalanine 295, and glutamate 378. Residue asparagine 188 participates in Mg(2+) binding.

This sequence belongs to the transketolase family. DXPS subfamily. In terms of assembly, homodimer. The cofactor is Mg(2+). Thiamine diphosphate serves as cofactor.

The catalysed reaction is D-glyceraldehyde 3-phosphate + pyruvate + H(+) = 1-deoxy-D-xylulose 5-phosphate + CO2. Its pathway is metabolic intermediate biosynthesis; 1-deoxy-D-xylulose 5-phosphate biosynthesis; 1-deoxy-D-xylulose 5-phosphate from D-glyceraldehyde 3-phosphate and pyruvate: step 1/1. Functionally, catalyzes the acyloin condensation reaction between C atoms 2 and 3 of pyruvate and glyceraldehyde 3-phosphate to yield 1-deoxy-D-xylulose-5-phosphate (DXP). The protein is 1-deoxy-D-xylulose-5-phosphate synthase of Pseudomonas fluorescens (strain SBW25).